Consider the following 221-residue polypeptide: Pectate lyase C (221 aa).

Positions 1–27 are cleaved as a signal peptide; sequence MKKIVSILFMFGLVMGFSQFQPSTVFA.

Belongs to the polysaccharide lyase 3 family. Ca(2+) is required as a cofactor.

The protein resides in the secreted. It carries out the reaction Eliminative cleavage of (1-&gt;4)-alpha-D-galacturonan to give oligosaccharides with 4-deoxy-alpha-D-galact-4-enuronosyl groups at their non-reducing ends.. It catalyses the reaction Eliminative cleavage of (1-&gt;4)-alpha-D-galacturonan methyl ester to give oligosaccharides with 4-deoxy-6-O-methyl-alpha-D-galact-4-enuronosyl groups at their non-reducing ends.. The protein operates within glycan metabolism; pectin degradation; 2-dehydro-3-deoxy-D-gluconate from pectin: step 2/5. Catalyzes the depolymerization of both polygalacturonate and pectins of methyl esterification degree from 22 to 89%, with an endo mode of action. In contrast to the majority of pectate lyases, displays high activity on highly methylated pectins. Is also able to cleave trigalacturonate to galacturonic acid and unsaturated digalacturonate. The chain is Pectate lyase C (pelC) from Bacillus subtilis (strain 168).